Reading from the N-terminus, the 642-residue chain is Uromodulin (642 aa).

The signal sequence occupies residues Met1–Ile26. Residues Arg32–Glu64 form the EGF-like 1 domain. 21 disulfide bridges follow: Cys34–Cys43, Cys37–Cys52, Cys54–Cys65, Cys71–Cys85, Cys79–Cys94, Cys96–Cys108, Cys114–Cys128, Cys122–Cys137, Cys139–Cys150, Cys152–Cys163, Cys157–Cys172, Cys176–Cys269, Cys197–Cys284, Cys219–Cys257, Cys225–Cys289, Cys250–Cys258, Cys299–Cys308, Cys302–Cys317, Cys319–Cys348, Cys336–Cys426, and Cys367–Cys390. Residue Asn40 is glycosylated (N-linked (GlcNAc...) asparagine). In terms of domain architecture, EGF-like 2; calcium-binding spans Asp67–Ile109. A glycan (N-linked (GlcNAc...) asparagine) is linked at Asn78. Residues Asp110–Glu151 form the EGF-like 3; calcium-binding domain. Residue Asn134 is glycosylated (N-linked (GlcNAc...) asparagine). Residues Cys152–Ala173 form a beta hairpin region. The interval Asp174–Thr293 is D10C. Residues Asn234 and Asn246 are each glycosylated (N-linked (GlcNAc...) asparagine). The N-linked (GlcNAc...) asparagine glycan is linked to Asn277. An EGF-like 4 domain is found at Ser294–Val325. A glycan (N-linked (GlcNAc...) asparagine) is linked at Asn324. A ZP-N region spans residues Glu335–Leu430. Residues Glu335–Ser590 form the ZP domain. Residues Asn397 and Asn448 are each glycosylated (N-linked (GlcNAc...) asparagine). Residues Asp431 to Thr454 form a flexible ZP-N/ZP-C linker; important for secretion and polymerization into filaments region. Residues Gly455–Gln465 are internal hydrophobic patch (IHP). Positions Gly455–Ser590 are ZP-C. 3 disulfide bridges follow: Cys507–Cys567, Cys528–Cys583, and Cys572–Cys579. Asn514 is a glycosylation site (N-linked (GlcNAc...) asparagine). The tract at residues Arg587–Ser590 is essential for cleavage by HPN. The external hydrophobic patch (EHP); regulates polymerization into filaments stretch occupies residues Val599–Arg607. Ser620 carries GPI-anchor amidated serine lipidation. Residues Ser621–Gln642 constitute a propeptide, removed in mature form.

As to quaternary structure, homodimer that then polymerizes into long filaments. The filaments can additionally assemble laterally to form a sheet. The filaments consist of a zigzag-shaped backbone with laterally protruding arms which interact with bacterial adhesin fimH. Two fimH molecules can bind to a single UMOD monomer. N-glycosylated. In terms of processing, proteolytically cleaved at a conserved C-terminal proteolytic cleavage site to generate the secreted form found in urine. This cleavage is catalyzed by HPN. Detected in kidney and pancreas.

It localises to the apical cell membrane. Its subcellular location is the basolateral cell membrane. The protein resides in the cell projection. It is found in the cilium membrane. The protein localises to the secreted. In terms of biological role, functions in biogenesis and organization of the apical membrane of epithelial cells of the thick ascending limb of Henle's loop (TALH), where it promotes formation of complex filamentous gel-like structure that may play a role in the water barrier permeability. May serve as a receptor for binding and endocytosis of cytokines (IL-1, IL-2) and TNF. Facilitates neutrophil migration across renal epithelia. In the urine, may contribute to colloid osmotic pressure, retards passage of positively charged electrolytes, and inhibits formation of liquid containing supersaturated salts and subsequent formation of salt crystals. Protects against urinary tract infections by binding to type 1 fimbriated E.coli. Binds to bacterial adhesin fimH which mediates the stable formation of bacterial aggregates, prevents the binding of E.coli to uroplakins UPK1A and UPK1B which act as urothelial receptors for type I fimbriae, and allows for pathogen clearance through micturation. Also promotes aggregation of other bacteria including K.pneumoniae, P.aeruginosa and S.mitis and so may also protect against other uropathogens. The chain is Uromodulin (UMOD) from Canis lupus familiaris (Dog).